We begin with the raw amino-acid sequence, 259 residues long: Phosphatidylglycerol--prolipoprotein diacylglyceryl transferase (259 aa).

The next 4 helical transmembrane spans lie at 9–29 (IIFS…VVGI), 55–75 (FITY…VLLY), 92–112 (EGGM…YLFC), and 117–137 (INFL…LFLG). Residue arginine 138 participates in a 1,2-diacyl-sn-glycero-3-phospho-(1'-sn-glycerol) binding. 3 helical membrane passes run 172 to 192 (QLYE…YAVF), 201 to 221 (GLNS…IEMF), and 228 to 248 (IGFI…MLLL).

This sequence belongs to the Lgt family.

Its subcellular location is the cell inner membrane. It catalyses the reaction L-cysteinyl-[prolipoprotein] + a 1,2-diacyl-sn-glycero-3-phospho-(1'-sn-glycerol) = an S-1,2-diacyl-sn-glyceryl-L-cysteinyl-[prolipoprotein] + sn-glycerol 1-phosphate + H(+). The protein operates within protein modification; lipoprotein biosynthesis (diacylglyceryl transfer). Its function is as follows. Catalyzes the transfer of the diacylglyceryl group from phosphatidylglycerol to the sulfhydryl group of the N-terminal cysteine of a prolipoprotein, the first step in the formation of mature lipoproteins. This is Phosphatidylglycerol--prolipoprotein diacylglyceryl transferase from Rickettsia typhi (strain ATCC VR-144 / Wilmington).